We begin with the raw amino-acid sequence, 197 residues long: Phosphoheptose isomerase (197 aa).

One can recognise an SIS domain in the interval 40–197; it reads CIASIAQGGK…LVEHSIFGKQ (158 aa). Position 55–57 (55–57) interacts with substrate; sequence NGG. The Zn(2+) site is built by His-64 and Glu-68. Substrate-binding positions include Glu-68, 97–98, 123–125, Ser-128, and Gln-175; these read ND and STS. 2 residues coordinate Zn(2+): Gln-175 and His-183.

The protein belongs to the SIS family. GmhA subfamily. As to quaternary structure, homotetramer. It depends on Zn(2+) as a cofactor.

The protein resides in the cytoplasm. The catalysed reaction is 2 D-sedoheptulose 7-phosphate = D-glycero-alpha-D-manno-heptose 7-phosphate + D-glycero-beta-D-manno-heptose 7-phosphate. The protein operates within carbohydrate biosynthesis; D-glycero-D-manno-heptose 7-phosphate biosynthesis; D-glycero-alpha-D-manno-heptose 7-phosphate and D-glycero-beta-D-manno-heptose 7-phosphate from sedoheptulose 7-phosphate: step 1/1. Its pathway is capsule biogenesis; capsule polysaccharide biosynthesis. Catalyzes the isomerization of sedoheptulose 7-phosphate in D-glycero-D-manno-heptose 7-phosphate. This is Phosphoheptose isomerase from Burkholderia mallei (strain ATCC 23344).